Consider the following 1307-residue polypeptide: SLDTTGNVDLTSANVKAGSLDLNAGNKLILDTATQTTHQVSRDGATSDKTTLGPAANLNVAGDASIKTGGDFQQNAGNLNVGGNLNANIGGNWNLGVQQTGEHKVVQRANGVSDTDLNSATGSTVNVGGKSAIGVGGDLTAQGARLDFGQGGTVAAKGNVTFGAASTTSTINANSSGDQGNRSYAETRHGADQALTGTTVKGGDTLNVVSGKDINVIGSTIDLKKGDANLLAAGDVNVGAATETHVYNSRETHSRSGVVSGTKIASSQDATSTVANGSLISADGVSIGSGKDINVQGSTVVGTHDVALNAAHDVNITTSQDTSQSSTTYQEQHSGLMSGGGLSFSVGNSKLAQQNQSSSVTNNASTVGSVDGNLTVNAGNTLHVKGSDLVAGKDVTGTAANIVVDSATDTTHQAQQQQTSKSGLTVGLSGSVGDAINNAISETQAARESAKDSNGRASALHSIAAAGDVAFGGLGAKALLDGAKGPQAPSIGVQVSVGSSHSSMQSSEDQTIQRGSSINAGGNAKLIATGNGTPKDGNITIAGSNVNAANVALVANNQVNLVNTTDTDKTQSSNSSSGSSVGVSIGTNGIGVSASMQRAHGDGNSDAAIQNNTHINASQTATIVSGGDTNVIGANVNANKVVADVGGNLNVASVQDTTVSAAHQSSAGGGFTISQTGGGASFSAQNGHADGNYAGVKEQAGIQAGSGGFDVTVKGNTDLKGAYIGSTADASKNSLTTGTLTTSDIENHSHYSANSAGFSAGASVGVSTKAVGPSSVSGSGGVTPMVFQNDSGDQSATTKSAVSVGAINITKPGEQTQDVANLNRDATNLNGTVSKTPDVQKMLSQQADTMNAAQAAGQTVSQGIGLYADGKRKDAIDAAKAAYERGDLVAMQSYIDQAKSWDEGGASRAGLQATGGALIGGLGGGSVLTAIGGAAGAGTSSLLAGQAEKISKSVGDMTGSSLVGNIAANVAATVGGALVGGSAGAAMASNVELYNAGNDPQKTDDRATIAGLQGLLSRTAAMASDAKAGVWNGMVNVAGVIVNIPNGGPFASPGDPGYVSLDGLKKPYKSGTSIGPDTEFLTPILATLGLGGKAAVGTDAGITSADVATVGNGALKNASGDLSAAANSARNQPYGQGASASQSPGTQGASSGSNISASNGSSSPTTIVASNPVDLNAFDRLNVVDPAVGKFRPGEAGAAAELENYLGGTLQRAPQGSSVDFVFSSGPNNGKTVDFMLTPDTVAQAAKINQFFDKNLNNFMNTLSDHAAAADFVPLDSRFLSEANKTLLVKAIGNLPQKLQAKIILIK.

The segment at 1-251 (SLDTTGNVDL…TETHVYNSRE (251 aa)) is FHA-2. The tract at residues 252–991 (THSRSGVVSG…SAGAAMASNV (740 aa)) is pretoxin (PT) domain. 2 stretches are compositionally biased toward low complexity: residues 317 to 336 (TTSQDTSQSSTTYQEQHSGL) and 491 to 507 (IGVQVSVGSSHSSMQSS). Disordered regions lie at residues 317-340 (TTSQDTSQSSTTYQEQHSGLMSGG) and 491-518 (IGVQVSVGSSHSSMQSSEDQTIQRGSSI). A compositionally biased stretch (polar residues) spans 508–518 (EDQTIQRGSSI). An ELYN C-terminal motif motif is present at residues 992 to 995 (ELYN). Positions 996 to 1193 (AGNDPQKTDD…VDPAVGKFRP (198 aa)) are probable inner membrane translocation domain. The disordered stretch occupies residues 1124-1164 (AAANSARNQPYGQGASASQSPGTQGASSGSNISASNGSSSP). Polar residues predominate over residues 1125–1147 (AANSARNQPYGQGASASQSPGTQ). The segment at 1147-1307 (QGASSGSNIS…KLQAKIILIK (161 aa)) is C-terminal effector domain (CT), has tRNA nuclease activity. The segment covering 1148 to 1163 (GASSGSNISASNGSSS) has biased composition (low complexity). Active-site residues include E1195, D1220, D1234, and H1266.

The protein belongs to the CdiA toxin family. As to quaternary structure, specifically interacts with cognate immunity protein CdiI, which blocks its tRNA nuclease activity. The CT domain forms a tetramer both with and without tRNA; each subunit binds tRNA in its presence.

Its subcellular location is the target cell. The protein resides in the target cell cytoplasm. Toxic component of a toxin-immunity protein module, which functions as a cellular contact-dependent growth inhibition (CDI) system. CDI modules allow bacteria to communicate with and inhibit the growth of closely related neighboring bacteria in a contact-dependent fashion. The C-terminal 160 residues (CT domain) acts as a general tRNA nuclease, and inhibits growth in E.coli upon overexpression. Cleaves specifically within the T-loop of E.coli tRNA2(Arg) (between the post-transcriptionally modified thymidine-T55 and pseudouridine-Y56); also degrades most other tRNAs. Cleaves unmodified tRNA(Gln) and tRNA(Asp), showing the universal post-translational tRNA modifications present in the T-loop are not required for CT activity. Inactive CT domain binds tRNA, probably in a complex with 4 CT domains and 4 tRNAs. Toxic activity is neutralized by coexpression of the cognate immunity protein CdiI in E.coli, but not by non-cognate immunity proteins from other strains of B.pseudomallei. In terms of biological role, the CdiA protein is thought to be exported from the cell through the central lumen of CdiB, the other half of its two-partner system (TPS). The TPS domain probably remains associated with CdiB while the FHA-1 domain forms an extended filament with the receptor-binding domain (RBD) at its extremity; in the secretion arrested state the C-terminus of the RBD domain form a hairpin-like structure as the FHA-2, PT and CT domains are periplasmic. Upon binding to a target cell outer membrane receptor a signal is transmitted to activate secretion. The filament elongates slightly, the rest of CdiA is secreted and the FHA-2 domain becomes stably associated with the target cell's outer membrane where it facilitates entry of the toxic CT domain into the target cell periplasm. From there the toxic CT domain is cleaved and gains access to the target cell cytoplasm via an inner membrane protein. This is tRNA nuclease CdiA (cdiA) from Burkholderia pseudomallei (Pseudomonas pseudomallei).